The chain runs to 80 residues: Defensin-like protein 207 (80 aa).

The first 29 residues, 1 to 29, serve as a signal peptide directing secretion; sequence MAKNLNSVSFIVLLLVLLVASTEILKSDA. Cystine bridges form between Cys-38–Cys-64, Cys-50–Cys-75, and Cys-54–Cys-77.

The protein belongs to the DEFL family.

The protein resides in the secreted. The chain is Defensin-like protein 207 from Arabidopsis thaliana (Mouse-ear cress).